The chain runs to 302 residues: Glycine--tRNA ligase alpha subunit (302 aa).

This sequence belongs to the class-II aminoacyl-tRNA synthetase family. Tetramer of two alpha and two beta subunits.

The protein localises to the cytoplasm. It catalyses the reaction tRNA(Gly) + glycine + ATP = glycyl-tRNA(Gly) + AMP + diphosphate. The polypeptide is Glycine--tRNA ligase alpha subunit (Xanthomonas axonopodis pv. citri (strain 306)).